A 271-amino-acid chain; its full sequence is WUSCHEL-related homeobox 6 (271 aa).

A DNA-binding region (homeobox; WUS-type) is located at residues 57-121 (AATLRWNPTP…NHKARERLKR (65 aa)). The interval 118-195 (RLKRRRREGG…TEESDQRASE (78 aa)) is disordered. Composition is skewed to basic and acidic residues over residues 132 to 148 (PHKD…RVDQ) and 180 to 195 (NEDH…RASE).

It belongs to the WUS homeobox family. In terms of tissue distribution, highly expressed in developing ovules. Present in developing primordia and differentiating organs but absent in mature organs.

It localises to the nucleus. Transcription factor that plays a central role in ovule patterning by regulating cell proliferation of the maternal integuments and differentiation of the maegaspore mother cell (MCC). Involved in AGAMOUS (AG) repression in leaves. This chain is WUSCHEL-related homeobox 6 (WOX6), found in Arabidopsis thaliana (Mouse-ear cress).